Reading from the N-terminus, the 207-residue chain is Putative threonylcarbamoyl-AMP synthase (207 aa).

The region spanning 15 to 199 is the YrdC-like domain; the sequence is EEERKKVLEF…KIISIREGVI (185 aa).

This sequence belongs to the SUA5 family.

It is found in the cytoplasm. The catalysed reaction is L-threonine + hydrogencarbonate + ATP = L-threonylcarbamoyladenylate + diphosphate + H2O. In terms of biological role, required for the formation of a threonylcarbamoyl group on adenosine at position 37 (t(6)A37) in tRNAs that read codons beginning with adenine. Catalyzes the conversion of L-threonine, HCO(3)(-)/CO(2) and ATP to give threonylcarbamoyl-AMP (TC-AMP) as the acyladenylate intermediate, with the release of diphosphate. This is Putative threonylcarbamoyl-AMP synthase from Methanocaldococcus jannaschii (strain ATCC 43067 / DSM 2661 / JAL-1 / JCM 10045 / NBRC 100440) (Methanococcus jannaschii).